A 274-amino-acid polypeptide reads, in one-letter code: NH(3)-dependent NAD(+) synthetase (274 aa).

An ATP-binding site is contributed by 46-53; sequence GISGGQDS. Residue aspartate 52 coordinates Mg(2+). Residue arginine 140 coordinates deamido-NAD(+). Threonine 160 serves as a coordination point for ATP. A Mg(2+)-binding site is contributed by glutamate 165. The deamido-NAD(+) site is built by lysine 173 and aspartate 180. ATP is bound by residues lysine 189 and threonine 211. 260–261 provides a ligand contact to deamido-NAD(+); the sequence is HK.

This sequence belongs to the NAD synthetase family. Homodimer.

It catalyses the reaction deamido-NAD(+) + NH4(+) + ATP = AMP + diphosphate + NAD(+) + H(+). The protein operates within cofactor biosynthesis; NAD(+) biosynthesis; NAD(+) from deamido-NAD(+) (ammonia route): step 1/1. Catalyzes the ATP-dependent amidation of deamido-NAD to form NAD. Uses ammonia as a nitrogen source. This is NH(3)-dependent NAD(+) synthetase from Streptococcus pyogenes serotype M3 (strain ATCC BAA-595 / MGAS315).